The primary structure comprises 430 residues: Ribosomal protein uS12 methylthiotransferase RimO (430 aa).

An MTTase N-terminal domain is found at 1-116; it reads MRVGIKVLGC…IANAIENGTD (116 aa). C10, C46, C79, C148, C152, and C155 together coordinate [4Fe-4S] cluster. A Radical SAM core domain is found at 134–365; the sequence is LEERPYAYVK…LLQAEISNSR (232 aa). One can recognise a TRAM domain in the interval 367 to 430; that stretch reads DRFVGKKLKF…DEYDMWGSVI (64 aa).

This sequence belongs to the methylthiotransferase family. RimO subfamily. As to quaternary structure, monomer. [4Fe-4S] cluster is required as a cofactor.

The protein resides in the cytoplasm. It carries out the reaction L-aspartate(89)-[ribosomal protein uS12]-hydrogen + (sulfur carrier)-SH + AH2 + 2 S-adenosyl-L-methionine = 3-methylsulfanyl-L-aspartate(89)-[ribosomal protein uS12]-hydrogen + (sulfur carrier)-H + 5'-deoxyadenosine + L-methionine + A + S-adenosyl-L-homocysteine + 2 H(+). Functionally, catalyzes the methylthiolation of an aspartic acid residue of ribosomal protein uS12. The sequence is that of Ribosomal protein uS12 methylthiotransferase RimO from Thermotoga maritima (strain ATCC 43589 / DSM 3109 / JCM 10099 / NBRC 100826 / MSB8).